Consider the following 342-residue polypeptide: Dihydroorotate dehydrogenase (quinone) (342 aa).

Residues 61–65 (AGLDK) and Thr-85 contribute to the FMN site. A substrate-binding site is contributed by Lys-65. Residue 110–114 (NRMGF) participates in substrate binding. The FMN site is built by Asn-138 and Asn-171. Substrate is bound at residue Asn-171. The Nucleophile role is filled by Ser-174. Asn-176 contacts substrate. The FMN site is built by Lys-216 and Thr-244. 245–246 (NT) lines the substrate pocket. Residues Gly-267, Gly-296, and 317-318 (YS) each bind FMN.

It belongs to the dihydroorotate dehydrogenase family. Type 2 subfamily. As to quaternary structure, monomer. Requires FMN as cofactor.

It localises to the cell membrane. It catalyses the reaction (S)-dihydroorotate + a quinone = orotate + a quinol. Its pathway is pyrimidine metabolism; UMP biosynthesis via de novo pathway; orotate from (S)-dihydroorotate (quinone route): step 1/1. Catalyzes the conversion of dihydroorotate to orotate with quinone as electron acceptor. The protein is Dihydroorotate dehydrogenase (quinone) of Pseudomonas paraeruginosa (strain DSM 24068 / PA7) (Pseudomonas aeruginosa (strain PA7)).